The sequence spans 390 residues: Probable galacturonosyltransferase-like 9 (390 aa).

The Cytoplasmic segment spans residues 1-10 (MRLRFPMKSA). Residues 11–31 (VLAFAIFLVFIPLFSVGIRMI) traverse the membrane as a helical; Signal-anchor for type II membrane protein segment. Residues 32 to 390 (PGRLTAVSAT…SELTEDSSFF (359 aa)) lie on the Lumenal side of the membrane. N-linked (GlcNAc...) asparagine glycosylation is found at asparagine 205 and asparagine 223.

The protein belongs to the glycosyltransferase 8 family.

Its subcellular location is the golgi apparatus membrane. The protein operates within glycan metabolism; pectin biosynthesis. Functionally, may be involved in pectin and/or xylans biosynthesis in cell walls. The chain is Probable galacturonosyltransferase-like 9 (GATL9) from Arabidopsis thaliana (Mouse-ear cress).